The primary structure comprises 152 residues: 17.1 kDa class II heat shock protein (152 aa).

Residues 36 to 152 (DAKAMAATPA…KPKTIQVKVA (117 aa)) enclose the sHSP domain.

Belongs to the small heat shock protein (HSP20) family.

The protein localises to the cytoplasm. This is 17.1 kDa class II heat shock protein (HSP17.7) from Pisum sativum (Garden pea).